The sequence spans 310 residues: Aspartate carbamoyltransferase catalytic subunit (310 aa).

Residues Arg58 and Thr59 each coordinate carbamoyl phosphate. Lys87 contacts L-aspartate. Carbamoyl phosphate is bound by residues Arg108, His136, and Gln139. Residues Arg169 and Arg229 each coordinate L-aspartate. Residues Leu268 and Pro269 each contribute to the carbamoyl phosphate site.

It belongs to the aspartate/ornithine carbamoyltransferase superfamily. ATCase family. In terms of assembly, heterododecamer (2C3:3R2) of six catalytic PyrB chains organized as two trimers (C3), and six regulatory PyrI chains organized as three dimers (R2).

The enzyme catalyses carbamoyl phosphate + L-aspartate = N-carbamoyl-L-aspartate + phosphate + H(+). It participates in pyrimidine metabolism; UMP biosynthesis via de novo pathway; (S)-dihydroorotate from bicarbonate: step 2/3. In terms of biological role, catalyzes the condensation of carbamoyl phosphate and aspartate to form carbamoyl aspartate and inorganic phosphate, the committed step in the de novo pyrimidine nucleotide biosynthesis pathway. This Leptospira biflexa serovar Patoc (strain Patoc 1 / Ames) protein is Aspartate carbamoyltransferase catalytic subunit.